The primary structure comprises 375 residues: Ribonuclease D (375 aa).

Positions 3-169 (YQMITTDDAL…LPITAKLMVE (167 aa)) constitute a 3'-5' exonuclease domain. An HRDC domain is found at 210 to 289 (RTRQLACLQL…EKAQTLPEDA (80 aa)).

The protein belongs to the RNase D family. A divalent metal cation serves as cofactor.

The protein resides in the cytoplasm. It catalyses the reaction Exonucleolytic cleavage that removes extra residues from the 3'-terminus of tRNA to produce 5'-mononucleotides.. Exonuclease involved in the 3' processing of various precursor tRNAs. Initiates hydrolysis at the 3'-terminus of an RNA molecule and releases 5'-mononucleotides. This chain is Ribonuclease D, found in Escherichia coli (strain K12).